The chain runs to 222 residues: MVQVIESRFMSSASHLDNAPPPNASEIVFLGRSNVGKSTLINTLLNKPLAKSSSTPGKTQLINFFASVWVWHNQRLPLTFIDLPGFGYAKVSKTIKKEWERHLLNFLFMRQSIKLFLHLVDARHTDLAIDTSVATMLEQICRGDQCILRIYTKADKLNQSALNALYKRVYIQKNKVQGVDTDDTHTQSLLFSAISKNHRKMVSLTHLREEIVKYTLGLENGI.

Residues 23 to 217 form the EngB-type G domain; that stretch reads NASEIVFLGR…REEIVKYTLG (195 aa). GTP contacts are provided by residues 31–38, 57–61, 82–85, 152–155, and 191–193; these read GRSNVGKS, GKTQL, DLPG, TKAD, and FSA. The Mg(2+) site is built by serine 38 and threonine 59.

The protein belongs to the TRAFAC class TrmE-Era-EngA-EngB-Septin-like GTPase superfamily. EngB GTPase family. It depends on Mg(2+) as a cofactor.

Necessary for normal cell division and for the maintenance of normal septation. The protein is Probable GTP-binding protein EngB of Helicobacter hepaticus (strain ATCC 51449 / 3B1).